Consider the following 163-residue polypeptide: Putative 4-hydroxy-4-methyl-2-oxoglutarate aldolase (163 aa).

Residues 76–79 (GDML) and arginine 98 each bind substrate. Residue aspartate 99 coordinates a divalent metal cation.

It belongs to the class II aldolase/RraA-like family. In terms of assembly, homotrimer. A divalent metal cation serves as cofactor.

It carries out the reaction 4-hydroxy-4-methyl-2-oxoglutarate = 2 pyruvate. The catalysed reaction is oxaloacetate + H(+) = pyruvate + CO2. Functionally, catalyzes the aldol cleavage of 4-hydroxy-4-methyl-2-oxoglutarate (HMG) into 2 molecules of pyruvate. Also contains a secondary oxaloacetate (OAA) decarboxylase activity due to the common pyruvate enolate transition state formed following C-C bond cleavage in the retro-aldol and decarboxylation reactions. The sequence is that of Putative 4-hydroxy-4-methyl-2-oxoglutarate aldolase from Pseudomonas entomophila (strain L48).